Consider the following 203-residue polypeptide: Endothelin-1 (203 aa).

The first 25 residues, 1–25 (MDYFPMIIALLFVAFQGAPETAVLG), serve as a signal peptide directing secretion. Positions 26–50 (AELSPEAESQGETPSPHASWRPRRS) are excised as a propeptide. The segment at 27 to 48 (ELSPEAESQGETPSPHASWRPR) is disordered. Disulfide bonds link Cys-53/Cys-67 and Cys-55/Cys-63. Positions 83–203 (YGLGSPSRSR…DKKVTHNRTH (121 aa)) are excised as a propeptide. The tract at residues 110–124 (CQCASQKDKKCWSFC) is endothelin-like. Asn-200 carries an N-linked (GlcNAc...) asparagine glycan.

The protein belongs to the endothelin/sarafotoxin family.

The protein localises to the secreted. Endothelins are endothelium-derived vasoconstrictor peptides. Probable ligand for G-protein coupled receptors EDNRA and EDNRB which activates PTK2B, BCAR1, BCAR3 and, GTPases RAP1 and RHOA cascade in glomerular mesangial cells. Also binds the DEAR/FBXW7-AS1 receptor. Promotes mesenteric arterial wall remodeling via activation of ROCK signaling and subsequent colocalization of NFATC3 with F-actin filaments. NFATC3 then translocates to the nucleus where it subsequently promotes the transcription of the smooth muscle hypertrophy and differentiation marker ACTA2. This Sus scrofa (Pig) protein is Endothelin-1 (EDN1).